A 987-amino-acid polypeptide reads, in one-letter code: Mitotic checkpoint serine/threonine-protein kinase bub-1 (987 aa).

Disordered regions lie at residues Arg278–Ser385 and Leu574–Ser599. The segment covering Glu350–Pro364 has biased composition (basic and acidic residues). Positions Ser368–Ala380 are enriched in low complexity. Residues Ala575–Ser587 are compositionally biased toward polar residues. Residues Ser588–Ser599 show a composition bias toward basic and acidic residues. The region spanning Leu690–Lys987 is the Protein kinase domain. Residues Ile696–Val704 and Lys718 each bind ATP. Asp814 functions as the Proton acceptor in the catalytic mechanism.

It belongs to the protein kinase superfamily. Ser/Thr protein kinase family. BUB1 subfamily. Interacts (via kinase domain) with mdf-1 (via coiled coil domain); the interaction recruits mdf-1 to unattached kinetochores during mitosis and between homologous chromosomes in early anaphase of meiosis I. May interact with bub-3; for localization at the kinetochore and the onset of anaphase.

It localises to the cytoplasm. The protein localises to the cell cortex. It is found in the nucleus. Its subcellular location is the chromosome. The protein resides in the centromere. It localises to the kinetochore. The catalysed reaction is L-seryl-[protein] + ATP = O-phospho-L-seryl-[protein] + ADP + H(+). The enzyme catalyses L-threonyl-[protein] + ATP = O-phospho-L-threonyl-[protein] + ADP + H(+). Functionally, serine/threonine-protein kinase essential for spindle-assembly checkpoint signaling. Plays a key role in the recruitment of the checkpoint proteins bub-3, mdf-1 and mdf-2 to unattached kinetochores. mdf-1 recruitment is independent of bub-1 kinase activity. Has a role in the correct kinetochore localization of the spindly-like protein spdl-1. In addition, during meiotic anaphase I, controls the recruitment of hcp-1/2 and klp-19 to the ring-shaped domain formed between chromosomes. Involved in chromosome alignment, chromosome homolog segregation and spindle assembly. In association with bub-3 at the kinetochore region of chromosomes, promotes the onset on anaphase independently from spindle checkpoint signaling and promotes the formation of stable end-on bipolar attachments of chromosomes. Plays a role in nuclear envelope breakdown. Required maternally during embryogenesis and in the zygote for the postembryonic development of several tissues including ventral cord neurons, gonad, intestine and seam cells. This Caenorhabditis elegans protein is Mitotic checkpoint serine/threonine-protein kinase bub-1.